Reading from the N-terminus, the 235-residue chain is Exotoxin type C (235 aa).

An N-terminal signal peptide occupies residues Met-1 to Ser-27. Residues His-194, His-228, and Asp-230 each contribute to the Zn(2+) site.

The protein belongs to the staphylococcal/streptococcal toxin family.

In terms of biological role, superantigen that acts as a causative agent of the symptoms associated with scarlet fever. Has been associated with streptococcal toxic shock-like disease and may play a role in the early events of rheumatic fever. Superantigens cross-link major histocompatibility complex (MHC) class II and T-cell receptor (TCR) molecules, resulting in an overstimulation of T-cells associated with a massive release of pyrogenic and inflammatory cytokines. The polypeptide is Exotoxin type C (Streptococcus pyogenes serotype M18 (strain MGAS8232)).